Consider the following 53-residue polypeptide: UPF0391 membrane protein Bcep18194_C7021 (53 aa).

A run of 2 helical transmembrane segments spans residues 5–25 and 30–50; these read AVIF…GIAA and IAKI…LLGV.

This sequence belongs to the UPF0391 family.

It localises to the cell membrane. The protein is UPF0391 membrane protein Bcep18194_C7021 of Burkholderia lata (strain ATCC 17760 / DSM 23089 / LMG 22485 / NCIMB 9086 / R18194 / 383).